The chain runs to 142 residues: MFRNLTEQIDNSVCVYCLKSDIPTSTTDIPTSTTPMTTSAPTTTMPRTVCQSCTLDATTVIMVHPSAKPFTSDTIDDTQTCAIRTLVCDARSPGGDVLVSFNRDDSGSTGGPNTFTTILNCNDDMQWTLSGIVITEIECQSA.

This is an uncharacterized protein from Caenorhabditis elegans.